Here is a 766-residue protein sequence, read N- to C-terminus: Serine/threonine-protein kinase tousled-like 1 (766 aa).

The residue at position 1 (methionine 1) is an N-acetylmethionine. The span at 1–19 (MSVQSSSGSLEGPPSWSQL) shows a compositional bias: polar residues. A disordered region spans residues 1-197 (MSVQSSSGSL…SPSPTALAFG (197 aa)). Over residues 20–33 (STSPTPGSAAAARS) the composition is skewed to low complexity. A Phosphothreonine modification is found at threonine 38. Residues 43–64 (RPREGAMDELHSLDPRRQELLE) are compositionally biased toward basic and acidic residues. Residues serine 54, serine 77, and serine 80 each carry the phosphoserine modification. The segment covering 68–85 (TGVASGSTGSTGSCSVGA) has biased composition (low complexity). Over residues 87 to 103 (ASTNNESSNHSFGSLGS) the composition is skewed to polar residues. Residues 105–121 (SDKESETPEKKQSESSR) show a composition bias toward basic and acidic residues. 4 positions are modified to phosphoserine: serine 134, serine 159, serine 174, and serine 176. Residues 170–192 (SPQNSHSHSTPSSSVRPNSPSPT) show a composition bias toward low complexity. The stretch at 230-281 (QDLEKKEGRIDDLLRANCDLRRQIDEQQKLLEKYKERLNKCISMSKKLLIEK) forms a coiled coil. Positions 346 to 383 (LAKRKPPTANNSQAPSTNSEPKQRKNKAVNGAENDPFV) are disordered. Positions 353–365 (TANNSQAPSTNSE) are enriched in polar residues. Residues 397-445 (HEQEEIFKLRLGHLKKEEAEIQAELERLERVRNLHIRELKRINNEDNSQ) adopt a coiled-coil conformation. Residues 456-734 (YLLLHLLGRG…VHQLANDPYL (279 aa)) form the Protein kinase domain. ATP is bound by residues 462–470 (LGRGGFSEV) and lysine 485. The active-site Proton acceptor is aspartate 586. Phosphoserine is present on serine 743.

Belongs to the protein kinase superfamily. Ser/Thr protein kinase family. In terms of assembly, heterodimer with TLK2. Requires Mg(2+) as cofactor. Widely expressed. Present in fetal placenta, liver, kidney and pancreas but not heart or skeletal muscle. Also found in adult cell lines. Isoform 3 is ubiquitously expressed in all tissues examined.

Its subcellular location is the nucleus. The enzyme catalyses L-seryl-[protein] + ATP = O-phospho-L-seryl-[protein] + ADP + H(+). The catalysed reaction is L-threonyl-[protein] + ATP = O-phospho-L-threonyl-[protein] + ADP + H(+). Its activity is regulated as follows. Cell-cycle regulated, maximal activity in S-phase. Inactivated by phosphorylation at Ser-743, potentially by CHEK1. Rapidly and transiently inhibited by phosphorylation following the generation of DNA double-stranded breaks during S-phase. This is cell cycle checkpoint and ATM-pathway dependent and appears to regulate processes involved in chromatin assembly. Isoform 3 phosphorylates and enhances the stability of the t-SNARE SNAP23, augmenting its assembly with syntaxin. Isoform 3 protects the cells from the ionizing radiation by facilitating the repair of DSBs. In vitro, phosphorylates histone H3 at 'Ser-10'. This Homo sapiens (Human) protein is Serine/threonine-protein kinase tousled-like 1 (TLK1).